A 428-amino-acid polypeptide reads, in one-letter code: Histidinol dehydrogenase (428 aa).

NAD(+)-binding residues include Y129, Q188, and N211. Substrate is bound by residues S234, Q256, and H259. Residues Q256 and H259 each coordinate Zn(2+). Active-site proton acceptor residues include E323 and H324. 4 residues coordinate substrate: H324, D357, E411, and H416. D357 is a binding site for Zn(2+). Position 416 (H416) interacts with Zn(2+).

This sequence belongs to the histidinol dehydrogenase family. It depends on Zn(2+) as a cofactor.

It catalyses the reaction L-histidinol + 2 NAD(+) + H2O = L-histidine + 2 NADH + 3 H(+). It participates in amino-acid biosynthesis; L-histidine biosynthesis; L-histidine from 5-phospho-alpha-D-ribose 1-diphosphate: step 9/9. Functionally, catalyzes the sequential NAD-dependent oxidations of L-histidinol to L-histidinaldehyde and then to L-histidine. The protein is Histidinol dehydrogenase of Caulobacter vibrioides (strain ATCC 19089 / CIP 103742 / CB 15) (Caulobacter crescentus).